The chain runs to 2514 residues: Polyprotein P1234 (2514 aa).

In terms of domain architecture, Alphavirus-like MT spans 28–259 (EPKQVTPNDH…ESRKLLQSWH (232 aa)). Positions 244-263 (GSTLYPESRKLLQSWHLPSV) are nsP1 membrane-binding. Residues Cys417 and Cys419 are each lipidated (S-palmitoyl cysteine; by host). Residues 690–842 (DLTSPPYHEF…HNICTQVYHK (153 aa)) form the (+)RNA virus helicase ATP-binding domain. Residue 721 to 728 (GVPGSGKS) coordinates a ribonucleoside 5'-triphosphate. The (+)RNA virus helicase C-terminal domain maps to 843 to 991 (SISRRCTLPV…IKEWEAEHAS (149 aa)). Positions 1004-1327 (DTFQNKANVC…NQLNAVYAGL (324 aa)) constitute a Peptidase C9 domain. Residues 1005–1024 (TFQNKANVCWAKCLVPILDT) form a nucleolus localization signal region. Cys1013 functions as the For cysteine protease nsP2 activity in the catalytic mechanism. The Nuclear export signal signature appears at 1058-1067 (TRIYGVDLDS). Catalysis depends on His1083, which acts as the For cysteine protease nsP2 activity. The Nuclear localization signal motif lies at 1182–1186 (PTKRV). Positions 1334 to 1493 (APSYRVKRMD…KITEAISLRS (160 aa)) constitute a Macro domain. ADP-D-ribose is bound by residues Asp1343, Asn1357, Gly1365, Gly1445, Val1446, and Tyr1447. Cys1595, Cys1597, Cys1620, and Cys1638 together coordinate Zn(2+). Short sequence motifs (FGDF; binding to host G3BP1) lie at residues 1852-1855 (FGDF) and 1870-1873 (FGDF). Residues 2268-2383 (DAVLETDIAS…HGVVSDALMA (116 aa)) form the RdRp catalytic domain.

In terms of assembly, interacts with non-structural protein 3. Interacts with RNA-directed RNA polymerase nsP4. Interacts with protease nsP2. interacts with itself. Interacts with mRNA-capping enzyme nsP1. Interacts with host DDX1. Interacts with host DDX3. Interacts (via C-terminus) with host G3BP1; this interaction inhibits the formation of host stress granules on viral mRNAs and the nsp3-G3BP1 complexes bind viral RNAs and probably orchestrate the assembly of viral replication complexes. Interacts (via C-terminus) with host G3BP2; this interaction inhibits the formation of host stress granules on viral mRNAs and the nsp3-G3BP2 complexes bind viral RNAs and probably orchestrate the assembly of viral replication complexes. As to quaternary structure, interacts with mRNA-capping enzyme nsP1. Interacts with protease nsP2. interacts with itself. In terms of assembly, interacts with RNA-directed RNA polymerase nsP4. Interacts with mRNA-capping enzyme nsP1. Interacts with KPNA1/karyopherin-alpha1; this interaction probably allows the active transport of protease nsP2 into the host nucleus. Requires Mg(2+) as cofactor. Mn(2+) serves as cofactor. Post-translationally, specific enzymatic cleavages in vivo yield mature proteins. The processing of the polyprotein is temporally regulated. In early stages (1.7 hpi), P1234 is first cleaved in trans through its nsP2 protease activity, releasing P123 and nsP4, which associate to form the early replication complex. At the same time, P1234 is also cut at the nsP1/nsP2 site early in infection but with lower efficiency. After replication of the viral minus-strand RNAs (4 hpi), the polyproteins are cut at the nsP1/nsP2 and nsP2/nsP3 sites very efficiently, preventing accumulation of P123 and P1234 and allowing the formation of the late replication complex. NsP3/nsP4 site is not cleaved anymore and P34 is produced rather than nsP4. In terms of processing, specific enzymatic cleavages in vivo yield mature proteins. The processing of the polyprotein is temporally regulated. In early stages (1.7 hpi), P123 is cleaved at the nsP1/nsP2 site with low efficiency. After replication of the viral minus-strand RNAs (4 hpi), the polyproteins are cut at the nsP1/nsP2 and nsP2/nsP3 sites very efficiently, preventing accumulation of P123 and allowing the formation of the late replication complex. Palmitoylated by host palmitoyltransferases ZDHHC2 and ZDHHC19. Post-translationally, phosphorylated by host on serines and threonines. In terms of processing, ubiquitinated; targets the protein for rapid degradation via the ubiquitin system. Nsp4 is present in extremely low quantities due to low frequency of translation through the amber stop-codon and the degradation by the ubiquitin pathway.

The protein localises to the host cytoplasmic vesicle membrane. The protein resides in the host cell membrane. It localises to the host cell projection. Its subcellular location is the host filopodium. It is found in the host nucleus. The protein localises to the host cytoplasm. The enzyme catalyses GTP + S-adenosyl-L-methionine = N(7)-methyl-GTP + S-adenosyl-L-homocysteine. It catalyses the reaction N(7)-methyl-GTP + L-histidyl-[protein] = N(tele)-(N(7)-methylguanosine 5'-phospho)-L-histidyl-[protein] + diphosphate. The catalysed reaction is N(tele)-(N(7)-methylguanosine 5'-phospho)-L-histidyl-[protein] + a 5'-end diphospho-(purine-ribonucleoside) in mRNA + H(+) = a 5'-end (N(7)-methyl 5'-triphosphoguanosine)-(purine-ribonucleoside) in mRNA + L-histidyl-[protein]. It carries out the reaction a 5'-end triphospho-ribonucleoside in mRNA + H2O = a 5'-end diphospho-ribonucleoside in mRNA + phosphate + H(+). The enzyme catalyses a ribonucleoside 5'-triphosphate + H2O = a ribonucleoside 5'-diphosphate + phosphate + H(+). It catalyses the reaction ATP + H2O = ADP + phosphate + H(+). The catalysed reaction is RNA(n) + a ribonucleoside 5'-triphosphate = RNA(n+1) + diphosphate. It carries out the reaction 4-O-(ADP-D-ribosyl)-L-aspartyl-[protein] + H2O = L-aspartyl-[protein] + ADP-D-ribose + H(+). The enzyme catalyses 5-O-(ADP-D-ribosyl)-L-glutamyl-[protein] + H2O = L-glutamyl-[protein] + ADP-D-ribose + H(+). It catalyses the reaction RNA(n) + ATP = RNA(n)-3'-adenine ribonucleotide + diphosphate. The catalysed reaction is ADP-alpha-D-ribose 1''-phosphate + H2O = ADP-D-ribose + phosphate. Functionally, inactive precursor of the viral replicase, which is activated by cleavages carried out by the viral protease nsP2. In terms of biological role, the early replication complex formed by the polyprotein P123 and nsP4 synthesizes minus-strand RNAs. As soon P123 is cleaved into mature proteins, the plus-strand RNAs synthesis begins. Its function is as follows. Cytoplasmic capping enzyme that catalyzes two virus-specific reactions: methyltransferase and nsP1 guanylyltransferase. mRNA-capping is necessary since all viral RNAs are synthesized in the cytoplasm, and host capping enzymes are restricted to the nucleus. The enzymatic reaction involves a covalent link between 7-methyl-GMP and nsP1, whereas eukaryotic capping enzymes form a covalent complex only with GMP. nsP1 capping consists in the following reactions: GTP is first methylated into 7-methyl-GMP and then is covalently linked to nsP1 to form the m7GMp-nsP1 complex from which 7-methyl-GMP complex is transferred to the mRNA to create the cap structure. NsP1 is also needed for the initiation of the minus-strand RNAs synthesis. Probably serves as a membrane anchor for the replication complex composed of nsP1-nsP4. Palmitoylated nsP1 is remodeling host cell cytoskeleton, and induces filopodium-like structure formation at the surface of the host cell. Multifunctional protein whose N-terminus is part of the RNA polymerase complex and displays NTPase, RNA triphosphatase and helicase activities. NTPase and RNA triphosphatase are involved in viral RNA capping and helicase keeps a check on the dsRNA replication intermediates. The C-terminus harbors a protease that specifically cleaves the polyproteins and releases the mature proteins. Required for the shutoff of minus-strand RNAs synthesis. Specifically inhibits the host IFN response by promoting the nuclear export of host STAT1. Also inhibits host transcription by inducing the rapid proteasome-dependent degradation of POLR2A, a catalytic subunit of the RNAPII complex. The resulting inhibition of cellular protein synthesis serves to ensure maximal viral gene expression and to evade host immune response. Functionally, seems to be essential for minus-strand RNAs and subgenomic 26S mRNAs synthesis. Displays mono-ADP-ribosylhydrolase activity. ADP-ribosylation is a post-translational modification that controls various processes of the host cell and the virus probably needs to revert it for optimal viral replication. Binds proteins of G3BP family and sequesters them into the viral RNA replication complexes thereby inhibiting the formation of host stress granules on viral mRNAs. The nsp3-G3BP complexes bind viral RNAs and probably orchestrate the assembly of viral replication complexes, thanks to the ability of G3BP family members to self-assemble and bind DNA. In terms of biological role, RNA dependent RNA polymerase. Replicates genomic and antigenomic RNA by recognizing replications specific signals. The early replication complex formed by the polyprotein P123 and nsP4 synthesizes minus-strand RNAs. The late replication complex composed of fully processed nsP1-nsP4 is responsible for the production of genomic and subgenomic plus-strand RNAs. This is Polyprotein P1234 from O'nyong-nyong virus (strain Gulu) (ONNV).